The primary structure comprises 376 residues: C2H2 type master regulator of conidiophore development brlA (376 aa).

Residues 20 to 29 (TSFSSASSSA) show a composition bias toward low complexity. Disordered regions lie at residues 20–47 (TSFS…ELSL), 197–229 (HHHH…ASPN), and 241–267 (EAQR…PESG). The span at 34–44 (TPSSRRSTPNE) shows a compositional bias: polar residues. Basic residues predominate over residues 197 to 209 (HHHHHNHHQHHHA). The segment covering 219–229 (QLHSNTGASPN) has biased composition (polar residues). The segment covering 241 to 256 (EAQRKTSELQRAQIRE) has biased composition (basic and acidic residues). The C2H2-type 1; degenerate zinc finger occupies 277-301 (CKCDYPGCNKAFRRNEHLKRHKQTF). Residues 309 to 332 (FSCEFCGKDQFNRQDNLNNHRKLH) form a C2H2-type 2 zinc finger. Positions 351–376 (IIEHEERSRKRRAPPKSKAEKRDYDF) are disordered. Residues 367–376 (SKAEKRDYDF) are compositionally biased toward basic and acidic residues.

It is found in the nucleus. Functionally, brlA, abaA and wetA are pivotal regulators of conidiophore development and conidium maturation. They act individually and together to regulate their own expression and that of numerous other sporulation-specific genes. Binds promoters of target genes at brlA response elements (BREs) containing the conserved sequence 5'-(C/A)(A/G)AGGG(G/A)-3'. This is C2H2 type master regulator of conidiophore development brlA from Hapsidospora chrysogena (Acremonium chrysogenum).